The sequence spans 193 residues: Guanylate kinase (193 aa).

Residues 12–191 (DLLTIVAGPT…AANELWLAMN (180 aa)) enclose the Guanylate kinase-like domain. 19-26 (GPTAVGKG) provides a ligand contact to ATP.

This sequence belongs to the guanylate kinase family.

The protein resides in the cytoplasm. The catalysed reaction is GMP + ATP = GDP + ADP. Its function is as follows. Essential for recycling GMP and indirectly, cGMP. This is Guanylate kinase from Tropheryma whipplei (strain TW08/27) (Whipple's bacillus).